Here is a 78-residue protein sequence, read N- to C-terminus: Large ribosomal subunit protein bL31 (78 aa).

It belongs to the bacterial ribosomal protein bL31 family. Type A subfamily. Part of the 50S ribosomal subunit.

Binds the 23S rRNA. The protein is Large ribosomal subunit protein bL31 (rpmE) of Rickettsia felis (strain ATCC VR-1525 / URRWXCal2) (Rickettsia azadi).